We begin with the raw amino-acid sequence, 136 residues long: Sec-independent protein translocase protein TatB (136 aa).

A helical membrane pass occupies residues 2–22 (FGSVGWGELLVLLIVGLVVLG). A disordered region spans residues 107-136 (VTEPAPTPIVNPELAKPAEPGPTRYDADAT).

It belongs to the TatB family. The Tat system comprises two distinct complexes: a TatABC complex, containing multiple copies of TatA, TatB and TatC subunits, and a separate TatA complex, containing only TatA subunits. Substrates initially bind to the TatABC complex, which probably triggers association of the separate TatA complex to form the active translocon.

It is found in the cell membrane. Its function is as follows. Part of the twin-arginine translocation (Tat) system that transports large folded proteins containing a characteristic twin-arginine motif in their signal peptide across membranes. Together with TatC, TatB is part of a receptor directly interacting with Tat signal peptides. TatB may form an oligomeric binding site that transiently accommodates folded Tat precursor proteins before their translocation. This Mycobacteroides abscessus (strain ATCC 19977 / DSM 44196 / CCUG 20993 / CIP 104536 / JCM 13569 / NCTC 13031 / TMC 1543 / L948) (Mycobacterium abscessus) protein is Sec-independent protein translocase protein TatB.